Consider the following 95-residue polypeptide: Large ribosomal subunit protein bL25 (95 aa).

Belongs to the bacterial ribosomal protein bL25 family. In terms of assembly, part of the 50S ribosomal subunit; part of the 5S rRNA/L5/L18/L25 subcomplex. Contacts the 5S rRNA. Binds to the 5S rRNA independently of L5 and L18.

In terms of biological role, this is one of the proteins that binds to the 5S RNA in the ribosome where it forms part of the central protuberance. The chain is Large ribosomal subunit protein bL25 from Shewanella pealeana (strain ATCC 700345 / ANG-SQ1).